Here is a 433-residue protein sequence, read N- to C-terminus: Phosphoribosylamine--glycine ligase (433 aa).

In terms of domain architecture, ATP-grasp spans 111–317; sequence EFMARNNIKG…FVDICEAIVD (207 aa). 138 to 194 provides a ligand contact to ATP; that stretch reads EDNPDVVVKPAGLTGGKGVKVMGEHMHTLEEAREYVKSVLEHDRVVIEERLKGEEVT. Mg(2+) contacts are provided by Gln275, Glu287, and Asn289. The Mn(2+) site is built by Gln275, Glu287, and Asn289.

The protein belongs to the GARS family. The cofactor is Mg(2+). Requires Mn(2+) as cofactor.

The catalysed reaction is 5-phospho-beta-D-ribosylamine + glycine + ATP = N(1)-(5-phospho-beta-D-ribosyl)glycinamide + ADP + phosphate + H(+). Its pathway is purine metabolism; IMP biosynthesis via de novo pathway; N(1)-(5-phospho-D-ribosyl)glycinamide from 5-phospho-alpha-D-ribose 1-diphosphate: step 2/2. The sequence is that of Phosphoribosylamine--glycine ligase from Methanocella arvoryzae (strain DSM 22066 / NBRC 105507 / MRE50).